The chain runs to 1107 residues: Unconventional myosin-Ie (1107 aa).

Residues 19 to 692 (SGVDDMVLLS…SLFLLEEMRE (674 aa)) enclose the Myosin motor domain. Position 112-119 (112-119 (GESGAGKT)) interacts with ATP. Residues 581-591 (PHYIRCIKPNE) form an actin-binding region. The region spanning 695–724 (YDGYARVIQKTWRKFVARKKYVQMREEASD) is the IQ domain. The 193-residue stretch at 730 to 922 (KERRRNSINR…NKVLQVSIGP (193 aa)) folds into the TH1 domain. Residues 919–1052 (SIGPGLPKNS…KPQPKPKPQV (134 aa)) form a disordered region. Polar residues-rich tracts occupy residues 979–989 (NQRSNQKSLYT) and 998–1012 (RQQS…QTPE). S1001 is modified (phosphoserine). Positions 1034 to 1051 (RPPPAGGRPKPQPKPKPQ) are enriched in pro residues. Residues 1050-1107 (PQVPQCKALYAYDAQDTDELSFNANDIIDIIKEDPSGWWTGRLRGKQGLFPNNYVTKI) form the SH3 domain.

It belongs to the TRAFAC class myosin-kinesin ATPase superfamily. Myosin family. In terms of assembly, interacts with CALM and F-actin. Interacts (via SH3 domain) with SYNJ1, DNM1 and DNM2. Interacts with ARL14EP. Interacts with CARMIL1. As to expression, detected in kidney glomeruli (at protein level). Detected in utricle.

The protein resides in the cytoplasm. The protein localises to the cell junction. It is found in the cytoplasmic vesicle. It localises to the clathrin-coated vesicle. Its subcellular location is the cytoskeleton. Myosins are actin-based motor molecules with ATPase activity. Unconventional myosins serve in intracellular movements. Their highly divergent tails bind to membranous compartments, which are then moved relative to actin filaments. Binds to membranes containing anionic phospholipids via its tail domain. Involved in clathrin-mediated endocytosis and intracellular movement of clathrin-coated vesicles. Required for normal morphology of the glomerular basement membrane, normal development of foot processes by kidney podocytes and normal kidney function. In dendritic cells, may control the movement of class II-containing cytoplasmic vesicles along the actin cytoskeleton by connecting them with the actin network via ARL14EP and ARL14. This is Unconventional myosin-Ie (Myo1e) from Mus musculus (Mouse).